Consider the following 87-residue polypeptide: DNA-directed RNA polymerase subunit omega (87 aa).

This sequence belongs to the RNA polymerase subunit omega family. The RNAP catalytic core consists of 2 alpha, 1 beta, 1 beta' and 1 omega subunit. When a sigma factor is associated with the core the holoenzyme is formed, which can initiate transcription.

It carries out the reaction RNA(n) + a ribonucleoside 5'-triphosphate = RNA(n+1) + diphosphate. In terms of biological role, promotes RNA polymerase assembly. Latches the N- and C-terminal regions of the beta' subunit thereby facilitating its interaction with the beta and alpha subunits. The sequence is that of DNA-directed RNA polymerase subunit omega from Pseudomonas fluorescens (strain SBW25).